A 471-amino-acid polypeptide reads, in one-letter code: uncharacterized protein (471 aa).

The next 11 membrane-spanning stretches (helical) occupy residues 15-35, 66-86, 89-109, 147-167, 179-199, 210-230, 237-257, 303-323, 353-373, 386-406, and 410-430; these read LWGPPLIILLTGTGLYFTILL, PLQALTSALSSTIGAANIVGV, AIMFGGPGAVFWMWLIALFAM, WLGVFFSVALIVELIPSIMVQ, FSFNKIYAGIGIAFLIGLVVI, EFVVPLMAGAYAGAGLLIVLM, AFFSLVFSNAFTSSSAVGGFA, VIGIVIDTLIICTTTAFIVLA, GYFVSVSLVFFVVSTIMVVIF, LAGHVIKFVYLAAIIIGAAGG, and IWGVLDLALVFIVVPNVIALL.

The protein belongs to the alanine or glycine:cation symporter (AGCS) (TC 2.A.25) family.

The protein localises to the cell membrane. This is an uncharacterized protein from Bacillus subtilis (strain 168).